Reading from the N-terminus, the 497-residue chain is Bloodstream-specific protein 2 (497 aa).

The N-terminal stretch at 1-14 (MRAIFLVALALATM) is a signal peptide. The 110-residue stretch at 15-124 (RESTAESLKL…IIKYIKANVG (110 aa)) folds into the Thioredoxin 1 domain. The N-linked (GlcNAc...) asparagine glycan is linked to Asn30. Cys48 and Cys51 are oxidised to a cystine. N-linked (GlcNAc...) asparagine glycans are attached at residues Asn63, Asn85, Asn153, Asn154, Asn250, and Asn278. The 122-residue stretch at 334 to 455 (EPTIKSLPVP…VYEFVRKHVT (122 aa)) folds into the Thioredoxin 2 domain. Residues Cys378 and Cys381 each act as nucleophile in the active site. Residues Cys378 and Cys381 are joined by a disulfide bond. Residues Asn413, Asn465, Asn476, Asn482, Asn485, and Asn488 are each glycosylated (N-linked (GlcNAc...) asparagine). Residues 461–497 (EKPANVTEEKKSEEENKSSKSNESNDSNESNVDKQDL) are disordered. The segment covering 467–480 (TEEKKSEEENKSSK) has biased composition (basic and acidic residues). A compositionally biased stretch (low complexity) spans 481–490 (SNESNDSNES).

This sequence belongs to the protein disulfide isomerase family.

The chain is Bloodstream-specific protein 2 (BS2) from Trypanosoma brucei brucei.